We begin with the raw amino-acid sequence, 918 residues long: Interleukin-6 receptor subunit beta (918 aa).

The signal sequence occupies residues 1-22 (MSALRIWLMQALLIFLTTESIG). At 23–618 (QLVEPCGYIY…TLKFAQGEIE (596 aa)) the chain is on the extracellular side. The Ig-like C2-type domain maps to 26–120 (EPCGYIYPEF…IEQNVYGITI (95 aa)). Intrachain disulfides connect cysteine 28/cysteine 54 and cysteine 48/cysteine 103. 4 N-linked (GlcNAc...) asparagine glycosylation sites follow: asparagine 43, asparagine 61, asparagine 83, and asparagine 131. Fibronectin type-III domains lie at 125-215 (PPDI…NFDP), 223-323 (PPHN…TYED), 328-418 (APSF…IPGS), 422-516 (ASHP…LKQA), and 518-612 (PSKG…TLKF). An intrachain disulfide couples cysteine 134 to cysteine 144. The N-linked (GlcNAc...) asparagine glycan is linked to asparagine 157. A disulfide bridge links cysteine 172 with cysteine 181. N-linked (GlcNAc...) asparagine glycosylation is found at asparagine 205 and asparagine 226. A WSXWS motif motif is present at residues 309–313 (WSDWS). Residues asparagine 382 and asparagine 389 are each glycosylated (N-linked (GlcNAc...) asparagine). A disulfide bond links cysteine 457 and cysteine 465. N-linked (GlcNAc...) asparagine glycans are attached at residues asparagine 477 and asparagine 552. Residues 619-640 (AIVVPVCLAFLLTTLLGVLFCF) form a helical membrane-spanning segment. Residues 641–918 (NKRDLIKKHI…TVRQGGYMPQ (278 aa)) are Cytoplasmic-facing. The Box 1 motif signature appears at 650 to 658 (IWPNVPDPS). Disordered stretches follow at residues 659-679 (KSHI…NSKD), 720-754 (TEGH…STAS), 773-795 (VQVF…PEDL), and 817-842 (SCSQ…GSEE). Residues serine 660 and serine 666 each carry the phosphoserine modification. Over residues 730–751 (SSCMSSSRPSISSSEENESAQS) the composition is skewed to low complexity. Residues 773–785 (VQVFSRSESTQPL) are compositionally biased toward polar residues. Phosphoserine is present on residues serine 781, serine 788, serine 828, and serine 838.

Belongs to the type I cytokine receptor family. Type 2 subfamily. Component of a hexamer of two molecules each of IL6, IL6R and IL6ST; associates with the complex IL6:IL6R but does not interact with IL6. Forms heterodimers composed of LIFR and IL6ST (type I OSM receptor) which are activated by LIF and OSM. Also forms heterodimers composed of OSMR and IL6ST (type II receptor) which are activated by OSM but not by LIF. Interacts with HCK. Interacts with INPP5D/SHIP1. Interacts with SRC and YES. Interacts with ARMH4; this interaction prevents IL6ST protein homodimerization and bridges ARMH4 with IL6R and STAT3 and therefore inhibits phosphorylation of STAT3 at 'Tyr-705'. Phosphorylation of Ser-781 down-regulates cell surface expression. In terms of processing, heavily N-glycosylated. Glycosylation is required for protein stability and localization in plasma membrane but not for ligand binding. In terms of tissue distribution, found in hepatocytes, astrocytes, fibroblasts and endothelial cells.

It is found in the cell membrane. In terms of biological role, signal-transducing molecule. The receptor systems for IL6, LIF, OSM, CNTF, IL11, CTF1 and BSF3 can utilize IL6ST for initiating signal transmission. Binding of IL6 to IL6R induces IL6ST homodimerization and formation of a high-affinity receptor complex, which activates the intracellular JAK-MAPK and JAK-STAT3 signaling pathways. That causes phosphorylation of IL6ST tyrosine residues which in turn activates STAT3. In parallel, the IL6 signaling pathway induces the expression of two cytokine receptor signaling inhibitors, SOCS1 and SOCS3, which inhibit JAK and terminate the activity of the IL6 signaling pathway as a negative feedback loop. Also activates the yes-associated protein 1 (YAP) and NOTCH pathways to control inflammation-induced epithelial regeneration, independently of STAT3. Mediates signals which regulate immune response, hematopoiesis, pain control and bone metabolism. Has a role in embryonic development. Essential for survival of motor and sensory neurons and for differentiation of astrocytes. Required for expression of TRPA1 in nociceptive neurons. Required for the maintenance of PTH1R expression in the osteoblast lineage and for the stimulation of PTH-induced osteoblast differentiation. Required for normal trabecular bone mass and cortical bone composition. The sequence is that of Interleukin-6 receptor subunit beta from Rattus norvegicus (Rat).